The sequence spans 418 residues: Serine hydroxymethyltransferase (418 aa).

Residues Leu-121 and 125 to 127 (GHL) each bind (6S)-5,6,7,8-tetrahydrofolate. At Lys-230 the chain carries N6-(pyridoxal phosphate)lysine. 356–358 (SPF) is a (6S)-5,6,7,8-tetrahydrofolate binding site.

The protein belongs to the SHMT family. In terms of assembly, homodimer. Pyridoxal 5'-phosphate is required as a cofactor.

The protein localises to the cytoplasm. The catalysed reaction is (6R)-5,10-methylene-5,6,7,8-tetrahydrofolate + glycine + H2O = (6S)-5,6,7,8-tetrahydrofolate + L-serine. It participates in one-carbon metabolism; tetrahydrofolate interconversion. It functions in the pathway amino-acid biosynthesis; glycine biosynthesis; glycine from L-serine: step 1/1. Catalyzes the reversible interconversion of serine and glycine with tetrahydrofolate (THF) serving as the one-carbon carrier. This reaction serves as the major source of one-carbon groups required for the biosynthesis of purines, thymidylate, methionine, and other important biomolecules. Also exhibits THF-independent aldolase activity toward beta-hydroxyamino acids, producing glycine and aldehydes, via a retro-aldol mechanism. This is Serine hydroxymethyltransferase from Idiomarina loihiensis (strain ATCC BAA-735 / DSM 15497 / L2-TR).